The chain runs to 199 residues: NAD(P)H dehydrogenase (quinone) (199 aa).

One can recognise a Flavodoxin-like domain in the interval 4–190 (MLVLYYSAYG…DGARFQGRRV (187 aa)). Residues 10–15 (SAYGHM) and 78–80 (TRY) contribute to the FMN site. Residue Tyr-12 coordinates NAD(+). A substrate-binding site is contributed by Trp-98. FMN is bound by residues 113–119 (STATQYG) and His-134. A disordered region spans residues 162 to 181 (GMTTTADGDGSRQPSAQELD). A compositionally biased stretch (polar residues) spans 163–177 (MTTTADGDGSRQPSA).

This sequence belongs to the WrbA family. Requires FMN as cofactor.

It catalyses the reaction a quinone + NADH + H(+) = a quinol + NAD(+). The enzyme catalyses a quinone + NADPH + H(+) = a quinol + NADP(+). The polypeptide is NAD(P)H dehydrogenase (quinone) (Brucella suis (strain ATCC 23445 / NCTC 10510)).